An 85-amino-acid chain; its full sequence is Cell division topological specificity factor (85 aa).

The protein belongs to the MinE family.

Functionally, prevents the cell division inhibition by proteins MinC and MinD at internal division sites while permitting inhibition at polar sites. This ensures cell division at the proper site by restricting the formation of a division septum at the midpoint of the long axis of the cell. The protein is Cell division topological specificity factor of Deinococcus geothermalis (strain DSM 11300 / CIP 105573 / AG-3a).